We begin with the raw amino-acid sequence, 520 residues long: Maturase K (520 aa).

Belongs to the intron maturase 2 family. MatK subfamily.

Its subcellular location is the plastid. The protein resides in the chloroplast. Its function is as follows. Usually encoded in the trnK tRNA gene intron. Probably assists in splicing its own and other chloroplast group II introns. The sequence is that of Maturase K from Cycas taitungensis (Prince sago).